The sequence spans 347 residues: NADH-ubiquinone oxidoreductase chain 2 (347 aa).

The next 11 helical transmembrane spans lie at 3–23 (PLIL…VMMS), 25–45 (HWLM…PLLM), 59–79 (YFLT…INLM), 96–116 (IIMT…FWVP), 122–142 (ISLT…LSIL), 148–168 (VINP…GGWG), 178–198 (ILAY…AFNP), 202–222 (LLNL…FMVA), 240–260 (ITTS…LAGF), 276–296 (IILA…YIRL), and 326–346 (LPPL…MILL).

Belongs to the complex I subunit 2 family. In terms of assembly, core subunit of respiratory chain NADH dehydrogenase (Complex I) which is composed of 45 different subunits. Interacts with TMEM242.

It is found in the mitochondrion inner membrane. The catalysed reaction is a ubiquinone + NADH + 5 H(+)(in) = a ubiquinol + NAD(+) + 4 H(+)(out). Its function is as follows. Core subunit of the mitochondrial membrane respiratory chain NADH dehydrogenase (Complex I) which catalyzes electron transfer from NADH through the respiratory chain, using ubiquinone as an electron acceptor. Essential for the catalytic activity and assembly of complex I. The chain is NADH-ubiquinone oxidoreductase chain 2 from Peropteryx kappleri (Greater dog-like bat).